A 275-amino-acid polypeptide reads, in one-letter code: MFKKSKYFTVRPETKREIPEGLWIKCQCGAILFAKDLERNLKVCQKCAHHFRLTARERIRITLDTEDFEELDAGLAPRDLLGFPGYAERLAANQKQTGLNEAAISAEGTIGGHRVVLVVMDSHFIMGSMGTVVGEKVARAAEHAVRNRLPLIVFSASGGARMQEGILSLMQMAKTAAAIGRLDSAGLLYVSVLTDPTMGGVSASFAFLGDIILAEPGALIGFAGPRVIEQTIRQKLPDGFQQAEFLQEHGFVDAVVPRSRLKDTLIKIIGMHQAG.

The CoA carboxyltransferase N-terminal domain maps to 21-275 (GLWIKCQCGA…IKIIGMHQAG (255 aa)). 4 residues coordinate Zn(2+): Cys-26, Cys-28, Cys-44, and Cys-47. A C4-type zinc finger spans residues 26-47 (CQCGAILFAKDLERNLKVCQKC).

The protein belongs to the AccD/PCCB family. Acetyl-CoA carboxylase is a heterohexamer composed of biotin carboxyl carrier protein (AccB), biotin carboxylase (AccC) and two subunits each of ACCase subunit alpha (AccA) and ACCase subunit beta (AccD). Requires Zn(2+) as cofactor.

The protein localises to the cytoplasm. It carries out the reaction N(6)-carboxybiotinyl-L-lysyl-[protein] + acetyl-CoA = N(6)-biotinyl-L-lysyl-[protein] + malonyl-CoA. Its pathway is lipid metabolism; malonyl-CoA biosynthesis; malonyl-CoA from acetyl-CoA: step 1/1. Its function is as follows. Component of the acetyl coenzyme A carboxylase (ACC) complex. Biotin carboxylase (BC) catalyzes the carboxylation of biotin on its carrier protein (BCCP) and then the CO(2) group is transferred by the transcarboxylase to acetyl-CoA to form malonyl-CoA. This Desulforudis audaxviator (strain MP104C) protein is Acetyl-coenzyme A carboxylase carboxyl transferase subunit beta.